Reading from the N-terminus, the 341-residue chain is Glucokinase (341 aa).

An ATP-binding site is contributed by 18 to 23 (GDIGGT).

Belongs to the bacterial glucokinase family.

Its subcellular location is the cytoplasm. The catalysed reaction is D-glucose + ATP = D-glucose 6-phosphate + ADP + H(+). The polypeptide is Glucokinase (Rhizobium leguminosarum bv. trifolii (strain WSM2304)).